A 550-amino-acid polypeptide reads, in one-letter code: Flagellin (550 aa).

It belongs to the bacterial flagellin family.

It localises to the secreted. The protein localises to the bacterial flagellum. Flagellin is the subunit protein which polymerizes to form the filaments of bacterial flagella. The protein is Flagellin (fliC) of Shigella flexneri.